A 112-amino-acid polypeptide reads, in one-letter code: UPF0122 protein CPE1714 (112 aa).

The protein belongs to the UPF0122 family.

In terms of biological role, might take part in the signal recognition particle (SRP) pathway. This is inferred from the conservation of its genetic proximity to ftsY/ffh. May be a regulatory protein. In Clostridium perfringens (strain 13 / Type A), this protein is UPF0122 protein CPE1714.